An 860-amino-acid polypeptide reads, in one-letter code: DNA gyrase subunit A (860 aa).

The region spanning 34 to 503 is the Topo IIA-type catalytic domain; it reads LPDARDGLKP…EDGELIDTDL (470 aa). Residue tyrosine 122 is the O-(5'-phospho-DNA)-tyrosine intermediate of the active site. Residues 530 to 536 carry the GyrA-box motif; it reads QNRATRG.

Belongs to the type II topoisomerase GyrA/ParC subunit family. Heterotetramer, composed of two GyrA and two GyrB chains. In the heterotetramer, GyrA contains the active site tyrosine that forms a transient covalent intermediate with DNA, while GyrB binds cofactors and catalyzes ATP hydrolysis.

The protein resides in the cytoplasm. The enzyme catalyses ATP-dependent breakage, passage and rejoining of double-stranded DNA.. A type II topoisomerase that negatively supercoils closed circular double-stranded (ds) DNA in an ATP-dependent manner to modulate DNA topology and maintain chromosomes in an underwound state. Negative supercoiling favors strand separation, and DNA replication, transcription, recombination and repair, all of which involve strand separation. Also able to catalyze the interconversion of other topological isomers of dsDNA rings, including catenanes and knotted rings. Type II topoisomerases break and join 2 DNA strands simultaneously in an ATP-dependent manner. This is DNA gyrase subunit A from Synechocystis sp. (strain ATCC 27184 / PCC 6803 / Kazusa).